The primary structure comprises 209 residues: Large ribosomal subunit protein uL3c (209 aa).

A disordered region spans residues 132–154 (PMSHGSKNHRLPGSIGAGSTPGR).

It belongs to the universal ribosomal protein uL3 family. In terms of assembly, part of the 50S ribosomal subunit.

The protein localises to the plastid. It localises to the cyanelle. Functionally, one of the primary rRNA binding proteins, it binds directly near the 3'-end of the 23S rRNA, where it nucleates assembly of the 50S subunit. This Cyanophora paradoxa protein is Large ribosomal subunit protein uL3c (rpl3).